The following is a 178-amino-acid chain: Acireductone dioxygenase (178 aa).

The interval 1–22 (MKAYWYDNKPGDQREPHDSGRP) is disordered. Residues 9–22 (KPGDQREPHDSGRP) are compositionally biased toward basic and acidic residues. Residues histidine 81, histidine 83, glutamate 87, and histidine 126 each coordinate Fe(2+). Residues histidine 81, histidine 83, glutamate 87, and histidine 126 each contribute to the Ni(2+) site.

This sequence belongs to the acireductone dioxygenase (ARD) family. Requires Fe(2+) as cofactor. Ni(2+) serves as cofactor.

It is found in the cytoplasm. It localises to the nucleus. It carries out the reaction 1,2-dihydroxy-5-(methylsulfanyl)pent-1-en-3-one + O2 = 4-methylsulfanyl-2-oxobutanoate + formate + 2 H(+). The catalysed reaction is 1,2-dihydroxy-5-(methylsulfanyl)pent-1-en-3-one + O2 = 3-(methylsulfanyl)propanoate + CO + formate + 2 H(+). It functions in the pathway amino-acid biosynthesis; L-methionine biosynthesis via salvage pathway; L-methionine from S-methyl-5-thio-alpha-D-ribose 1-phosphate: step 5/6. In terms of biological role, catalyzes 2 different reactions between oxygen and the acireductone 1,2-dihydroxy-3-keto-5-methylthiopentene (DHK-MTPene) depending upon the metal bound in the active site. Fe-containing acireductone dioxygenase (Fe-ARD) produces formate and 2-keto-4-methylthiobutyrate (KMTB), the alpha-ketoacid precursor of methionine in the methionine recycle pathway. Ni-containing acireductone dioxygenase (Ni-ARD) produces methylthiopropionate, carbon monoxide and formate, and does not lie on the methionine recycle pathway. The chain is Acireductone dioxygenase (adi1) from Emericella nidulans (strain FGSC A4 / ATCC 38163 / CBS 112.46 / NRRL 194 / M139) (Aspergillus nidulans).